The chain runs to 1822 residues: Sperm flagellar protein 2 (1822 aa).

The Calponin-homology (CH) domain maps to 1–105; sequence MSEILCQWLN…LLYQLYIALQ (105 aa). Coiled-coil stretches lie at residues 227–260, 321–396, 732–758, and 871–909; these read KALEAQKMMKKKKEAEDVADEIKKFEALIKKDLQ, AHEA…KQAK, NQAQLLEEALTGCNRNLTEVERKKAQK, and CEKVKEILTTEIAKKKNKVEKKLEEKEAEKKAAASLAEL. Disordered stretches follow at residues 896-1004, 1278-1327, 1664-1718, and 1803-1822; these read KEAE…VPQP, EEEK…EATP, SIPS…NNEK, and EHVQGSDGERSPSRHTEEKK. The segment covering 911–920 has biased composition (pro residues); it reads LPTPPPAPPP. 2 stretches are compositionally biased toward basic and acidic residues: residues 921 to 930 and 949 to 968; these read EPEKEKEIHQ and PHGKQESLQEGKGKKGETAL. Over residues 975-987 the composition is skewed to low complexity; the sequence is KGKSSGGKVPVKK. 2 stretches are compositionally biased toward basic and acidic residues: residues 1278 to 1292 and 1303 to 1314; these read EEEKENQPADPKEKS and KEPPKKKQEDKK. An interaction with IFT20 region spans residues 1324-1676; sequence EATPVIVTTE…SAEKTSSTDA (353 aa). Residues 1686 to 1712 are a coiled coil; the sequence is EENAAREERKLKDDTEKREQKDEEIPE. The span at 1688–1708 shows a compositional bias: basic and acidic residues; the sequence is NAAREERKLKDDTEKREQKDE.

As to quaternary structure, interacts (via C-terminus) with IFT20. Interacts with DYNC1I2.

The protein resides in the cell projection. It localises to the cilium. It is found in the flagellum. Its subcellular location is the cytoplasm. The protein localises to the golgi apparatus. Functionally, required for correct axoneme development in spermatozoa. Important for normal development of the manchette and sperm head morphology. Essential for male fertility. Plays a role in localization of the intraflagellar transport protein IFT20 to the manchette, suggesting function as an adapter for dynein-mediated protein transport during spermatogenesis. Also plays a role in bone growth where it seems to be required for normal osteoblast differentiation. The sequence is that of Sperm flagellar protein 2 (SPEF2) from Homo sapiens (Human).